The following is a 1073-amino-acid chain: Error-prone DNA polymerase (1073 aa).

Residues glutamate 41–glycine 73 form a disordered region. Residues proline 60–glycine 73 show a composition bias toward basic and acidic residues.

This sequence belongs to the DNA polymerase type-C family. DnaE2 subfamily.

The protein localises to the cytoplasm. It carries out the reaction DNA(n) + a 2'-deoxyribonucleoside 5'-triphosphate = DNA(n+1) + diphosphate. DNA polymerase involved in damage-induced mutagenesis and translesion synthesis (TLS). It is not the major replicative DNA polymerase. This is Error-prone DNA polymerase from Corynebacterium efficiens (strain DSM 44549 / YS-314 / AJ 12310 / JCM 11189 / NBRC 100395).